We begin with the raw amino-acid sequence, 317 residues long: Taste receptor type 2 member 14 (317 aa).

Topologically, residues 1–7 (MGGVIKS) are extracellular. A helical transmembrane segment spans residues 8–28 (IFTFVLIVEFIIGNLGNSFIA). Residues 29-55 (LVNCIDWVKGRKISSVDRILTALAISR) lie on the Cytoplasmic side of the membrane. A helical membrane pass occupies residues 56–76 (ISLVWLIFGSWCVSVFFPALF). Residues 77–87 (ATEKMFRMLTN) lie on the Extracellular side of the membrane. The cholesterol site is built by T86 and W89. The helical transmembrane segment at 88–108 (IWTVINHFSVWLATGLGTFYF) threads the bilayer. The Cytoplasmic portion of the chain corresponds to 109–129 (LKIANFSNSIFLYLKWRVKKV). The helical transmembrane segment at 130 to 150 (VLVLLLVTSVFLFLNIALINI) threads the bilayer. Topologically, residues 151-184 (HINASINGYRRNKTCSSDSSNFTRFSSLIVLTST) are extracellular. Residues N153, N162, and N171 are each glycosylated (N-linked (GlcNAc...) asparagine). V180 contacts cholesterol. A helical transmembrane segment spans residues 185–205 (VFIFIPFTLSLAMFLLLIFSM). Residues 206–232 (WKHRKKMQHTVKISGDASTKAHRGVKS) lie on the Cytoplasmic side of the membrane. A helical membrane pass occupies residues 233 to 253 (VITFFLLYAIFSLSFFISVWT). The Extracellular portion of the chain corresponds to 254–261 (SERLEENL). Residues 262-282 (IILSQVMGMAYPSCHSCVLIL) form a helical membrane-spanning segment. Residues S265 and M268 each coordinate cholesterol. Over 283–317 (GNKKLRQASLSVLLWLRYMFKDGEPSGHKEFRESS) the chain is Cytoplasmic.

It belongs to the G-protein coupled receptor T2R family. In terms of assembly, core component of the TAS2R14-GNAI1 complex, consisting of TAS2R14, GNAI1, GNB1 and GNG2; within the complex interacts with GNAI1. Core component of the TAS2R14-GNAT3 complex, consisting of TAS2R14, GNAT3, GNB1 and GNG2; within the complex interacts with GNAT3. Core component of the TAS2R14-GNAS2 complex, consisting of TAS2R14, GNAS2, GNB1 and GNG2; within the complex interacts with GNAS2. In terms of tissue distribution, highly expressed in cerebellum, pancreas, small intestine and thymus; also expressed in adipose, aorta, skin and tongue, but at significantly lower levels. Expressed in subsets of taste receptor cells of the tongue and palate epithelium and exclusively in gustducin-positive cells. Expressed in testis.

The protein resides in the membrane. It catalyses the reaction Ca(2+)(in) = Ca(2+)(out). It carries out the reaction 3',5'-cyclic AMP(in) = 3',5'-cyclic AMP(out). With respect to regulation, basal activity is enhanced by binding to bitter tastants, such as flufenamic acid and aristolochic acid. Regulated by cholesterol in a concentration-dependent manner. In terms of biological role, gustducin-linked G-protein coupled receptor that plays a role in the perception of bitterness. The activity of this receptor stimulates GNAT3, activating the gustducin G-protein pathway. Likely plays a role in sensing the chemical composition of the gastrointestinal content and other extra-oral tissues via the inhibitory G-protein pathways. The polypeptide is Taste receptor type 2 member 14 (TAS2R14) (Homo sapiens (Human)).